The sequence spans 194 residues: SRP-independent targeting protein 3 homolog (194 aa).

A run of 2 helical transmembrane segments spans residues 43–63 and 110–130; these read ILYA…KIII and LVTI…PPLL.

Belongs to the PHO88 family.

Its subcellular location is the endoplasmic reticulum membrane. Its function is as follows. May function in a SRP (signal recognition particle) and GET (guided entry of tail-anchored proteins) independent pathway for targeting a broad range of substrate proteins to the endoplasmic reticulum. Involved in inorganic phosphate uptake. Also involved in telomere length regulation and maintenance. The polypeptide is SRP-independent targeting protein 3 homolog (Schizosaccharomyces pombe (strain 972 / ATCC 24843) (Fission yeast)).